Here is a 229-residue protein sequence, read N- to C-terminus: Peptidase E (229 aa).

Catalysis depends on charge relay system residues S120, D135, and H157.

This sequence belongs to the peptidase S51 family.

It is found in the cytoplasm. The enzyme catalyses Dipeptidase E catalyzes the hydrolysis of dipeptides Asp-|-Xaa. It does not act on peptides with N-terminal Glu, Asn or Gln, nor does it cleave isoaspartyl peptides.. In terms of biological role, hydrolyzes dipeptides containing N-terminal aspartate residues. May play a role in allowing the cell to use peptide aspartate to spare carbon otherwise required for the synthesis of the aspartate family of amino acids. This chain is Peptidase E, found in Citrobacter koseri (strain ATCC BAA-895 / CDC 4225-83 / SGSC4696).